The primary structure comprises 236 residues: 2,3,4,5-tetrahydropyridine-2,6-dicarboxylate N-acetyltransferase (236 aa).

It belongs to the transferase hexapeptide repeat family. DapH subfamily.

The enzyme catalyses (S)-2,3,4,5-tetrahydrodipicolinate + acetyl-CoA + H2O = L-2-acetamido-6-oxoheptanedioate + CoA. Its pathway is amino-acid biosynthesis; L-lysine biosynthesis via DAP pathway; LL-2,6-diaminopimelate from (S)-tetrahydrodipicolinate (acetylase route): step 1/3. In terms of biological role, catalyzes the transfer of an acetyl group from acetyl-CoA to tetrahydrodipicolinate. This Bacillus subtilis (strain 168) protein is 2,3,4,5-tetrahydropyridine-2,6-dicarboxylate N-acetyltransferase.